Here is a 258-residue protein sequence, read N- to C-terminus: Phosphate import ATP-binding protein PstB (258 aa).

In terms of domain architecture, ABC transporter spans 5–247; it reads LDLKDVNIYY…EKIFSNPTQK (243 aa). Residue 37-44 participates in ATP binding; sequence GPSGCGKS.

Belongs to the ABC transporter superfamily. Phosphate importer (TC 3.A.1.7) family. In terms of assembly, the complex is composed of two ATP-binding proteins (PstB), two transmembrane proteins (PstC and PstA) and a solute-binding protein (PstS).

It is found in the cell membrane. The enzyme catalyses phosphate(out) + ATP + H2O = ADP + 2 phosphate(in) + H(+). Functionally, part of the ABC transporter complex PstSACB involved in phosphate import. Responsible for energy coupling to the transport system. This chain is Phosphate import ATP-binding protein PstB, found in Rhodococcus jostii (strain RHA1).